The sequence spans 2892 residues: E3 ubiquitin-protein ligase lubel (2892 aa).

Disordered stretches follow at residues 23–55, 125–252, 395–423, 483–631, 644–672, 685–737, 757–865, and 949–975; these read DRIG…KSTP, KQHM…QLEK, SQQH…QFGS, PSAA…ESEG, QKLQ…ENTQ, AHEE…PDHE, CCKT…DNSL, and DRFT…QQES. Over residues 40-52 the composition is skewed to low complexity; the sequence is GLPKAPALPPKAK. Residues 189 to 198 are compositionally biased toward gly residues; that stretch reads GWRGSLGGGA. A compositionally biased stretch (polar residues) spans 206-215; it reads ATSSANQMNN. 2 stretches are compositionally biased toward low complexity: residues 402–412 and 483–503; these read AQHPHQALPQH and PSAA…TPSR. The segment covering 516–528 has biased composition (acidic residues); the sequence is VDDELTDDEDSDQ. Over residues 535–546 the composition is skewed to polar residues; it reads VSNRSGMTSASR. A compositionally biased stretch (basic residues) spans 547–560; that stretch reads SQHHQNHIQPRQRR. The span at 606–623 shows a compositional bias: polar residues; the sequence is GTLTRNKTATDSARTSRI. Positions 647-670 are enriched in basic and acidic residues; that stretch reads QEADQHKSSKKAEPKRKPEMKDEN. A compositionally biased stretch (polar residues) spans 801-813; it reads KPTTKSQQPSQKS. Composition is skewed to low complexity over residues 818 to 837 and 846 to 856; these read SKTT…AVNS and KTPSKSTLKTS. A UBA-like 1 domain is found at 1042-1187; sequence MHIILKELEL…LMRIWGSPNG (146 aa). 7 disordered regions span residues 1214 to 1252, 1477 to 1520, 1557 to 1653, 1717 to 2019, 2032 to 2082, 2191 to 2316, and 2411 to 2431; these read LQPP…SPYQ, LPTA…KLET, AEVQ…KILS, STTI…NLSE, RDEI…EGNT, SAPP…PLRS, and DYET…EPQK. Residues 1241–1252 show a composition bias toward polar residues; that stretch reads VKSTYATPSPYQ. Over residues 1510-1519 the composition is skewed to basic and acidic residues; it reads EELRQQEKLE. Positions 1560–1571 are enriched in polar residues; the sequence is QVQSDDQPSTSR. Positions 1576–1587 are enriched in basic residues; sequence RAKRSQQSRKGR. Positions 1595 to 1607 are enriched in polar residues; it reads PTNRTKLPNNIDQ. The span at 1608-1627 shows a compositional bias: basic and acidic residues; it reads KVNESKTAAKETEAVKDKDL. Composition is skewed to polar residues over residues 1630 to 1653, 1717 to 1726, and 1764 to 1779; these read AASN…KILS, STTISEQSEG, and KSPT…TSHI. Residues 1822–1834 show a composition bias toward low complexity; the sequence is LSSSSLRSESRSS. The segment covering 1859-1881 has biased composition (polar residues); it reads TVSSPKSEQLSDNQEVNLVSQET. Positions 1918 to 1927 are enriched in acidic residues; it reads DSDEVFEDAP. The segment covering 1953–1963 has biased composition (basic and acidic residues); the sequence is DGQRAETKSPE. Composition is skewed to acidic residues over residues 1964–1975 and 2036–2079; these read DEVVILLDEESQ and SMDE…DGEE. Low complexity-rich tracts occupy residues 2214–2230 and 2269–2291; these read PSEV…ALPI and SGTA…TVSK. A compositionally biased stretch (polar residues) spans 2297–2308; that stretch reads NEPTNKSNSTPL. Positions 2411–2425 are enriched in acidic residues; the sequence is DYETSATEEEQEEPN. A UBA-like 2 domain is found at 2457-2513; sequence DPAILARKYVDQELVTNIAEAQIAATLVSMKFSEDVALWAARECSDLDQAIAMLQQE. Residues 2510–2748 are TRIAD supradomain; the sequence is LQQECELCMN…LGLHAHHPRN (239 aa). Zn(2+) is bound by residues Cys-2514, Cys-2517, Cys-2537, Cys-2540, Cys-2618, Cys-2621, Cys-2636, Cys-2639, Cys-2644, Cys-2647, His-2655, Cys-2660, Cys-2690, and Cys-2693. Residues 2514 to 2564 form an RING-type 1 zinc finger; it reads CELCMNSYPMNQMVSMLKCLHKCCKQCAKSYFTVQITDRSINDCSCPFCKL. The segment at 2514-2892 is necessary for linear polyubiquitination and sufficent for inducing DptA in the intestine; it reads CELCMNSYPM…IKKHIPLKSA (379 aa). Residues 2601-2660 form an IBR-type zinc finger; it reads QRKLRDRSLLQDPNFKWCIQCSSGFFARPKQKRLICPDCGSVTCAQCRKPWERQHEGSSC. The RING-type 2; atypical zinc finger occupies 2690–2720; it reads CPKCKFRYSLARGGCMHFTCTQCKFEFCYGC. The active site involves Cys-2704. Residues Cys-2709 and Cys-2712 each contribute to the Zn(2+) site.

Belongs to the RBR family.

It carries out the reaction [E2 ubiquitin-conjugating enzyme]-S-ubiquitinyl-L-cysteine + [acceptor protein]-L-lysine = [E2 ubiquitin-conjugating enzyme]-L-cysteine + [acceptor protein]-N(6)-ubiquitinyl-L-lysine.. Functionally, E3 ubiquitin-protein ligase which conjugates linear 'Met-1'- and 'Lys-63'-linked polyubiquitin chains to substrates and plays a crucial role in the NF-kappa-B intestinal inflammatory response to oral infection and in the heat stress response. Preferentially interacts with 'Lys-63'-linked, and to a lesser extent 'Lys-48'-linked, polyubiquitin chains. Upon oral infection with a Gram-negative bacterium E.carotovora subsp. carotovora 15, functions with the E2 ubiquitin-conjugating enzyme Ubc10 to mediate the conjugation of 'Lys-63'- and linear 'Met-1'-linked polyubiquitin chains to the substrate key which is essential for activation of the NF-kappa-B signaling cascade in the adult intestinal epithelium. It is not required for systemic immune response to septic infection with either E.carotovora subsp. carotovora 15 or Gram-positive M.luteus bacteria. Function in controlling linear ubiquitination is also essential for regulating the heat stress response in adults. This function may require the E2 ubiquitin-conjugating enzymes Ubc10 or eff. In Drosophila melanogaster (Fruit fly), this protein is E3 ubiquitin-protein ligase lubel.